We begin with the raw amino-acid sequence, 645 residues long: Acetyl-coenzyme A synthetase (645 aa).

Residues Arg-190–Arg-193 and Thr-309 each bind CoA. Residues Gly-385–Pro-387, Asp-409–Thr-414, Asp-498, and Arg-513 each bind ATP. Position 521 (Ser-521) interacts with CoA. Arg-524 provides a ligand contact to ATP. Residues Val-535, His-537, and Val-540 each contribute to the Mg(2+) site. Arg-582 contributes to the CoA binding site. An N6-acetyllysine modification is found at Lys-607.

It belongs to the ATP-dependent AMP-binding enzyme family. It depends on Mg(2+) as a cofactor. Acetylated. Deacetylation by the SIR2-homolog deacetylase activates the enzyme.

The enzyme catalyses acetate + ATP + CoA = acetyl-CoA + AMP + diphosphate. Functionally, catalyzes the conversion of acetate into acetyl-CoA (AcCoA), an essential intermediate at the junction of anabolic and catabolic pathways. AcsA undergoes a two-step reaction. In the first half reaction, AcsA combines acetate with ATP to form acetyl-adenylate (AcAMP) intermediate. In the second half reaction, it can then transfer the acetyl group from AcAMP to the sulfhydryl group of CoA, forming the product AcCoA. The sequence is that of Acetyl-coenzyme A synthetase from Methylocella silvestris (strain DSM 15510 / CIP 108128 / LMG 27833 / NCIMB 13906 / BL2).